Here is a 334-residue protein sequence, read N- to C-terminus: Phosphoribosylformylglycinamidine cyclo-ligase (334 aa).

The protein belongs to the AIR synthase family.

The protein resides in the cytoplasm. It catalyses the reaction 2-formamido-N(1)-(5-O-phospho-beta-D-ribosyl)acetamidine + ATP = 5-amino-1-(5-phospho-beta-D-ribosyl)imidazole + ADP + phosphate + H(+). Its pathway is purine metabolism; IMP biosynthesis via de novo pathway; 5-amino-1-(5-phospho-D-ribosyl)imidazole from N(2)-formyl-N(1)-(5-phospho-D-ribosyl)glycinamide: step 2/2. This chain is Phosphoribosylformylglycinamidine cyclo-ligase, found in Thermococcus gammatolerans (strain DSM 15229 / JCM 11827 / EJ3).